The sequence spans 105 residues: Cortistatin (105 aa).

The signal sequence occupies residues 1 to 18 (MPLSPGLLLLLLSGATAT). Positions 19-74 (AALPLEGGPTGRDSEHMQEAAGIRKSSLLTFLAWWFEWTSQASAGPLIGEEAREVA) are excised as a propeptide. Cys-93 and Cys-104 form a disulfide bridge.

It belongs to the somatostatin family. Expressed in a subset of GABAergic cells in the cortex and hippocampus.

The protein resides in the secreted. Functionally, binds to all human somatostatin receptor (SSTR) subtypes. It also inhibits cAMP production induced by forskolin through SSTRs. In Homo sapiens (Human), this protein is Cortistatin (CORT).